The following is a 918-amino-acid chain: Non-lysosomal glucosylceramidase (918 aa).

The interval 886–918 (HKKSRRPSVTQGTGLSTQPECGPKRSLANLNSE) is disordered. The span at 892–904 (PSVTQGTGLSTQP) shows a compositional bias: polar residues. Ser-893 carries the phosphoserine modification.

Belongs to the non-lysosomal glucosylceramidase family. As to expression, widely expressed at low level. Highly expressed in testis and brain. Ubiquitously expressed in the brain (at protein level). Expressed by Sertoli cells (at protein level).

The protein localises to the endoplasmic reticulum membrane. It is found in the golgi apparatus membrane. It catalyses the reaction a beta-D-glucosyl-(1&lt;-&gt;1')-N-acylsphing-4-enine + H2O = an N-acylsphing-4-enine + D-glucose. The enzyme catalyses a beta-D-galactosyl-(1&lt;-&gt;1')-N-acylsphing-4-enine + H2O = an N-acylsphing-4-enine + D-galactose. The catalysed reaction is beta-D-glucosyl-(1-&gt;3)-O-lithocholate + H2O = lithocholate + D-glucose. It carries out the reaction beta-D-glucosyl-(1-&gt;3)-O-chenodeoxycholate + H2O = chenodeoxycholate + D-glucose. It catalyses the reaction a di-trans,poly-cis-dolichyl beta-D-glucosyl phosphate + chenodeoxycholate = beta-D-glucosyl-(1-&gt;3)-O-chenodeoxycholate + a di-trans,poly-cis-dolichyl phosphate + H(+). The enzyme catalyses octyl beta-D-glucose + chenodeoxycholate = beta-D-glucosyl-(1-&gt;3)-O-chenodeoxycholate + octan-1-ol. The catalysed reaction is cholesteryl 3-beta-D-glucoside + H2O = cholesterol + D-glucose. It carries out the reaction a beta-D-glucosyl-(1&lt;-&gt;1')-N-acylsphing-4-enine + cholesterol = cholesteryl 3-beta-D-glucoside + an N-acylsphing-4-enine. It catalyses the reaction beta-D-glucosyl-N-(9Z-octadecenoyl)-sphing-4E-enine + cholesterol = N-(9Z-octadecenoyl)-sphing-4-enine + cholesteryl 3-beta-D-glucoside. The enzyme catalyses a beta-D-galactosyl-(1&lt;-&gt;1')-N-acylsphing-4-enine + cholesterol = cholesteryl 3-beta-D-galactoside + an N-acylsphing-4-enine. The catalysed reaction is 1-(beta-D-galactosyl)-N-dodecanoylsphing-4-enine + cholesterol = cholesteryl 3-beta-D-galactoside + N-dodecanoylsphing-4-enine. Its pathway is lipid metabolism; sphingolipid metabolism. The protein operates within steroid metabolism; cholesterol metabolism. Enzymatic activity is dependent on membrane association and requires the presence of lipids. Inhibited by N-(adamantanemethyloxypentyl)-deoxynojirimycin/AMP-DNM. Inhibited by its product sphingosine/N-acylsphing-4-enine in a feedback loop. Also inhibited by other non-acetylated sphingoid bases and their derivatives but not by sphingosine-1-phosphate and complex sphingolipids. Its function is as follows. Non-lysosomal glucosylceramidase that catalyzes the hydrolysis of glucosylceramides/GlcCers (such as beta-D-glucosyl-(1&lt;-&gt;1')-N-acylsphing-4-enine) to free glucose and ceramides (such as N-acylsphing-4-enine). GlcCers are membrane glycosphingolipids that have a wide intracellular distribution. They are the main precursors of more complex glycosphingolipids that play a role in cellular growth, differentiation, adhesion, signaling, cytoskeletal dynamics and membrane properties. Also involved in the transglucosylation of cholesterol, transferring glucose from GlcCer, thereby modifying its water solubility and biological properties. Under specific conditions, may catalyze the reverse reaction, transferring glucose from cholesteryl-3-beta-D-glucoside to ceramide (such as N-acylsphing-4-enine). May play a role in the metabolism of bile acids. Able to hydrolyze bile acid 3-O-glucosides as well as to produce bile acid-glucose conjugates thanks to a bile acid glucosyl transferase activity. Catalyzes the hydrolysis of galactosylceramides/GalCers (such as beta-D-galactosyl-(1&lt;-&gt;1')-N-acylsphing-4-enine), as well as galactosyl transfer between GalCers and cholesterol in vitro with lower activity compared with their activity against GlcCers. The sequence is that of Non-lysosomal glucosylceramidase from Mus musculus (Mouse).